The sequence spans 161 residues: Troponin C, slow skeletal and cardiac muscles (161 aa).

N-acetylmethionine is present on methionine 1. EF-hand domains are found at residues 16–51 (QKNEFKAAFDIFVLGAEDGCISTKELGKVMRMLGQN), 52–87 (PTPEELQEMIDEVDEDGSGTVDFDEFLVMMVRCMKD), 92–127 (KSEEELSDLFRMFDKNADGYIDLDELKIMLQATGET), and 128–161 (ITEDDIEELMKDGDKNNDGRIDYDEFLEFMKGVE). The Ca(2+) site is built by aspartate 65, aspartate 67, serine 69, threonine 71, and glutamate 76. A Phosphoserine modification is found at serine 98. Ca(2+) is bound by residues aspartate 105, asparagine 107, aspartate 109, tyrosine 111, glutamate 116, aspartate 141, asparagine 143, aspartate 145, arginine 147, and glutamate 152.

The protein belongs to the troponin C family.

In terms of biological role, troponin is the central regulatory protein of striated muscle contraction. Tn consists of three components: Tn-I which is the inhibitor of actomyosin ATPase, Tn-T which contains the binding site for tropomyosin and Tn-C. The binding of calcium to Tn-C abolishes the inhibitory action of Tn on actin filaments. This Homo sapiens (Human) protein is Troponin C, slow skeletal and cardiac muscles (TNNC1).